Consider the following 555-residue polypeptide: Urocanate hydratase (555 aa).

Residues G51–G52, Q129, G175–G177, E195, Q262–H266, Y272–L273, and Y321 contribute to the NAD(+) site. The active site involves C409. G491 lines the NAD(+) pocket.

Belongs to the urocanase family. It depends on NAD(+) as a cofactor.

It is found in the cytoplasm. It catalyses the reaction 4-imidazolone-5-propanoate = trans-urocanate + H2O. It participates in amino-acid degradation; L-histidine degradation into L-glutamate; N-formimidoyl-L-glutamate from L-histidine: step 2/3. Its function is as follows. Catalyzes the conversion of urocanate to 4-imidazolone-5-propionate. This chain is Urocanate hydratase, found in Xanthomonas campestris pv. campestris (strain ATCC 33913 / DSM 3586 / NCPPB 528 / LMG 568 / P 25).